The chain runs to 354 residues: DnaJ homolog shv (354 aa).

The signal sequence occupies residues 1–22 (MQLIKCLVIIQLSLLLVEESFA). One can recognise a J domain in the interval 25–90 (DFYKILNVKK…DKRKTYDRCG (66 aa)). N-linked (GlcNAc...) asparagine glycans are attached at residues Asn260 and Asn312.

As to expression, in the testes, detected at low levels in somatic hub cells, cyst stem cells and the apical tip (at protein level). Levels in the testes decrease with age (at protein level). Expressed at low levels in hub cells, cyst stem cells and germline stem cells, and at high levels in spermatocytes and cyst cells.

The protein localises to the nucleus. It is found in the cell membrane. Its subcellular location is the secreted. Maintains stem cell niche architecture in the testes. Activates an extracellular integrin beta-PS pathway which regulates DE-cadherin (shg) levels in somatic hub cells, and is essential for maintaining the number of germline stem cells and the structure and localization of hub cells. The chain is DnaJ homolog shv from Drosophila melanogaster (Fruit fly).